We begin with the raw amino-acid sequence, 52 residues long: DNA import protein CedA2 (52 aa).

2 consecutive transmembrane segments (helical) span residues 1 to 21 (MKSYLLVSMLLLLNSILVYIY) and 27 to 47 (ILVSGITVAVIIYIVVKIIFE).

In terms of assembly, forms a complex composed of CedA, CedA1 and CedA2.

The protein localises to the cell membrane. In terms of biological role, part of the Ced system, which is involved in DNA import. This is DNA import protein CedA2 from Sulfolobus acidocaldarius (strain ATCC 33909 / DSM 639 / JCM 8929 / NBRC 15157 / NCIMB 11770).